The following is a 239-amino-acid chain: MNKINLEDKIILAIDGLNIQEAKLFLERCPNIKWVKVGLELFTREGPNVIKFLKDLNKKIFLDLKFHDIPNTMEAACYEVSKLGVDIISVHASSGYKALTSSKNASLDGANLASVNPPNIVGITVLTSFSSEEFRNDLDRKNSIEENVVRLAKLCFDAGLDGCVCSPWEAKRLRSIYKNNFELITPGIRTKTQNKDDQNRIMTPYEALKNGASRLVIGRAISKAKDPNKVFLDICNSIY.

Residues D15, K36, 63-72, T127, R189, Q198, G218, and R219 contribute to the substrate site; that span reads DLKFHDIPNT. Residue K65 is the Proton donor of the active site.

It belongs to the OMP decarboxylase family. Type 1 subfamily. In terms of assembly, homodimer.

The catalysed reaction is orotidine 5'-phosphate + H(+) = UMP + CO2. Its pathway is pyrimidine metabolism; UMP biosynthesis via de novo pathway; UMP from orotate: step 2/2. In terms of biological role, catalyzes the decarboxylation of orotidine 5'-monophosphate (OMP) to uridine 5'-monophosphate (UMP). The sequence is that of Orotidine 5'-phosphate decarboxylase from Prochlorococcus marinus (strain MIT 9515).